Here is a 449-residue protein sequence, read N- to C-terminus: N-succinylarginine dihydrolase (449 aa).

Substrate is bound by residues 19–28 (GGLSYGNVAS), N110, and 137–138 (HR). The tract at residues 23-43 (YGNVASQSNSQQGSNPREAAR) is disordered. Residues 25-37 (NVASQSNSQQGSN) show a composition bias toward polar residues. E174 is an active-site residue. Position 214 (R214) interacts with substrate. Residue H250 is part of the active site. Substrate-binding residues include D252 and N365. C371 acts as the Nucleophile in catalysis.

It belongs to the succinylarginine dihydrolase family. As to quaternary structure, homodimer.

It carries out the reaction N(2)-succinyl-L-arginine + 2 H2O + 2 H(+) = N(2)-succinyl-L-ornithine + 2 NH4(+) + CO2. It functions in the pathway amino-acid degradation; L-arginine degradation via AST pathway; L-glutamate and succinate from L-arginine: step 2/5. Functionally, catalyzes the hydrolysis of N(2)-succinylarginine into N(2)-succinylornithine, ammonia and CO(2). In Pseudomonas entomophila (strain L48), this protein is N-succinylarginine dihydrolase.